We begin with the raw amino-acid sequence, 215 residues long: uncharacterized protein (215 aa).

This is an uncharacterized protein from Methanocaldococcus jannaschii (strain ATCC 43067 / DSM 2661 / JAL-1 / JCM 10045 / NBRC 100440) (Methanococcus jannaschii).